The sequence spans 217 residues: Somatotropin (217 aa).

Residues 1 to 26 (MAPGSRTSLLLAFGLLCLPWLQEGSA) form the signal peptide. H44 is a Zn(2+) binding site. A disulfide bridge links C79 with C191. A Phosphoserine modification is found at S132. E200 lines the Zn(2+) pocket. The cysteines at positions 208 and 215 are disulfide-linked.

Belongs to the somatotropin/prolactin family.

It is found in the secreted. Its function is as follows. Plays an important role in growth control. Its major role in stimulating body growth is to stimulate the liver and other tissues to secrete IGF1. It stimulates both the differentiation and proliferation of myoblasts. It also stimulates amino acid uptake and protein synthesis in muscle and other tissues. This Pan troglodytes (Chimpanzee) protein is Somatotropin (GH1).